The following is a 259-amino-acid chain: Transmembrane protein 81 (259 aa).

The signal sequence occupies residues 1 to 18 (MALSTLWLVLMLWTSLFS). The Extracellular portion of the chain corresponds to 19–221 (DSQCSTLSQA…KVYSSSTIRN (203 aa)). The region spanning 97–172 (GRRLVLDCLE…VLDTGKRRVK (76 aa)) is the Ig-like domain. The cysteines at positions 104 and 161 are disulfide-linked. A helical membrane pass occupies residues 222-242 (IVIISVPLSFAIAVVIFIFLF). Over 243-259 (CYSRRARRAAHLCQDNI) the chain is Cytoplasmic.

Forms a complex with izumo1 and spaca6 on spermatocyte cell membrane. The complex binds to oocyte protein bncr. In terms of tissue distribution, expressed in sperm.

It localises to the cell membrane. In terms of biological role, essential fertilization factor required for male fertility. Part of a conserved trimeric sperm complex with the essential fertilization factors IZUMO1 and SPACA6 which bridges sperm and oocyte membranes during fertilization by binding to IZUMO1R/JUNO on the oocyte. This is Transmembrane protein 81 from Danio rerio (Zebrafish).